The primary structure comprises 59 residues: UPF0391 membrane protein lpg2521 (59 aa).

The next 2 membrane-spanning stretches (helical) occupy residues 5-25 (ALIF…GIAV) and 30-50 (IAKI…IMGL).

This sequence belongs to the UPF0391 family.

It is found in the cell membrane. The chain is UPF0391 membrane protein lpg2521 from Legionella pneumophila subsp. pneumophila (strain Philadelphia 1 / ATCC 33152 / DSM 7513).